The chain runs to 33 residues: Protamine (33 aa).

The segment at 1–33 (MPRRRRSSSRPVRRRRRPRVSRRRRRRGGRRRR) is disordered.

As to expression, testis.

The protein resides in the nucleus. The protein localises to the chromosome. Functionally, protamines substitute for histones in the chromatin of sperm during the haploid phase of spermatogenesis. They compact sperm DNA into a highly condensed, stable and inactive complex. This Oncorhynchus keta (Chum salmon) protein is Protamine.